Consider the following 557-residue polypeptide: Putative UDP-glucuronate:xylan alpha-glucuronosyltransferase 4 (557 aa).

A helical; Signal-anchor for type II membrane protein transmembrane segment spans residues 11-31 (KIFMIYLILVSLSLLGLILPF). Residues Asp-365 and Asp-367 each coordinate Mn(2+). Substrate contacts are provided by residues 365–367 (DAD), 394–396 (NSG), 421–425 (NGGDQ), and 466–471 (HYLGLK). Residue His-466 participates in Mn(2+) binding.

It belongs to the glycosyltransferase 8 family. Glycogenin subfamily. Requires Mn(2+) as cofactor.

It localises to the golgi apparatus membrane. In terms of biological role, may be involved in the substitutions of the xylan backbone in stem glucuronoxylan. This chain is Putative UDP-glucuronate:xylan alpha-glucuronosyltransferase 4 (GUX4), found in Arabidopsis thaliana (Mouse-ear cress).